We begin with the raw amino-acid sequence, 463 residues long: Fibrinogen beta chain (463 aa).

Residues 1–12 show a composition bias toward acidic residues; it reads ASVEYDNEEDSP. The tract at residues 1 to 56 is disordered; it reads ASVEYDNEEDSPQIDARAHRPLDKRQEAAPTLRPVAPPISGTGYQPRPPKQDKQAM. Tyr5 carries the post-translational modification Sulfotyrosine. Residues 16-27 are compositionally biased toward basic and acidic residues; it reads ARAHRPLDKRQE. 2 disulfide bridges follow: Cys205–Cys289 and Cys215–Cys244. Positions 206 to 461 constitute a Fibrinogen C-terminal domain; sequence NIPVVSGREC…KMSMKIKPYF (256 aa). N-linked (GlcNAc...) asparagine glycosylation is present at Asn367. Ca(2+)-binding residues include Asp384, Asp386, and Trp388. Cys397 and Cys410 are joined by a disulfide.

As to quaternary structure, heterohexamer; disulfide linked. Contains 2 sets of 3 non-identical chains (alpha, beta and gamma). The 2 heterotrimers are in head to head conformation with the N-termini in a small central domain. Post-translationally, conversion of fibrinogen to fibrin is triggered by thrombin, which cleaves fibrinopeptides A and B from alpha and beta chains, and thus exposes the N-terminal polymerization sites responsible for the formation of the soft clot. The soft clot is converted into the hard clot by factor XIIIA which catalyzes the epsilon-(gamma-glutamyl)lysine cross-linking between gamma chains (stronger) and between alpha chains (weaker) of different monomers.

It localises to the secreted. Its function is as follows. Cleaved by the protease thrombin to yield monomers which, together with fibrinogen alpha (FGA) and fibrinogen gamma (FGG), polymerize to form an insoluble fibrin matrix. Fibrin has a major function in hemostasis as one of the primary components of blood clots. The polypeptide is Fibrinogen beta chain (FGB) (Gallus gallus (Chicken)).